The following is a 281-amino-acid chain: LIM domain-containing protein G (281 aa).

LIM zinc-binding domains lie at 40-101 (LNCS…IKFN), 141-205 (DICT…SKQV), and 206-262 (NCFA…FTQP).

The polypeptide is LIM domain-containing protein G (limG) (Dictyostelium discoideum (Social amoeba)).